Reading from the N-terminus, the 240-residue chain is Putative S-adenosylmethionine-dependent methyltransferase RcsF (240 aa).

In terms of domain architecture, TsaA-like spans 5–142; it reads ISPIGHVRSC…YVPYADIVPD (138 aa). S-adenosyl-L-methionine is bound by residues 22-24, 63-64, Arg-91, and 122-125; these read PRQ, HQ, and LDGT.

This sequence belongs to the tRNA methyltransferase O family.

The polypeptide is Putative S-adenosylmethionine-dependent methyltransferase RcsF (rcsF) (Pseudomonas aeruginosa).